Reading from the N-terminus, the 49-residue chain is DCESGPCCDNCKFLKEGTICKMARGDNMHHYCNGKTCDCPRNPYKGEHD.

Residues 1–47 enclose the Disintegrin domain; sequence DCESGPCCDNCKFLKEGTICKMARGDNMHHYCNGKTCDCPRNPYKGE. 4 disulfides stabilise this stretch: cysteine 2-cysteine 11, cysteine 7-cysteine 32, cysteine 8-cysteine 37, and cysteine 20-cysteine 39. The Cell attachment site signature appears at 24–26; that stretch reads RGD.

Belongs to the venom metalloproteinase (M12B) family. P-II subfamily. P-IIa sub-subfamily. As to quaternary structure, monomer. Expressed by the venom gland.

Its subcellular location is the secreted. Inhibits ADP-induced human platelet aggregation. The sequence is that of Disintegrin ocellatin from Echis ocellatus (Ocellated saw-scaled viper).